A 492-amino-acid chain; its full sequence is MTDLTTLDAAELAGKIHSREVSSVEVTQAHLDRIAAVDTEYHAFLHVAGEQALEAAAAVDNSLAGGNEPASALAGVPIALKDIFTTTDMPTTCASKILEGWVAPYDATLTSKLRAAGIPILGKTNLDEFAMGSSTENSAFGPTRNPWDVTRIPGGSGGGSAAALASRQAPLAIGTDTGGSIRQPAAVTATVGTKPTYGTVSRFGLVACASSLDQGGPCGRTVLDTALLHEVIAGHDPRDSTSIDAPVRPVVAAAREGAAGDLRGVKVGVVKELHSDSYQPGVIASFDAAVEQLKALGAEVVEVSCPSFEHALASYYLVLPSEVSSNLARFDAMRYGLRVDEGNMSADQVMAATRAAGFGPEVKRRIMIGTYALSSGYYDAYYGSALKVRTLIARDFDKAYEKVDVLVSPTSPFTPWKLGEKVGDPLAMYLSDLCTLPTNLAGHCAMSVPSGLSADDNLPVGLQIMAPAMADERLYRVGAAYEAARGPIATAV.

Active-site charge relay system residues include Lys-81 and Ser-156. The active-site Acyl-ester intermediate is Ser-180.

The protein belongs to the amidase family. GatA subfamily. As to quaternary structure, heterotrimer of A, B and C subunits.

The catalysed reaction is L-glutamyl-tRNA(Gln) + L-glutamine + ATP + H2O = L-glutaminyl-tRNA(Gln) + L-glutamate + ADP + phosphate + H(+). Functionally, allows the formation of correctly charged Gln-tRNA(Gln) through the transamidation of misacylated Glu-tRNA(Gln) in organisms which lack glutaminyl-tRNA synthetase. The reaction takes place in the presence of glutamine and ATP through an activated gamma-phospho-Glu-tRNA(Gln). The chain is Glutamyl-tRNA(Gln) amidotransferase subunit A from Rhodococcus erythropolis (strain PR4 / NBRC 100887).